The chain runs to 261 residues: tRNA threonylcarbamoyladenosine dehydratase (261 aa).

A helical transmembrane segment spans residues 230 to 250 (CANGFGAATMITATFGFFAVS).

Belongs to the HesA/MoeB/ThiF family.

The protein resides in the membrane. Its function is as follows. Catalyzes the ATP-dependent dehydration of threonylcarbamoyladenosine at position 37 (t(6)A37) to form cyclic t(6)A37 (ct(6)A37) in tRNAs that read codons beginning with adenine. The protein is tRNA threonylcarbamoyladenosine dehydratase (tcdA) of Haemophilus influenzae (strain ATCC 51907 / DSM 11121 / KW20 / Rd).